The chain runs to 781 residues: MSKVRVYEYAKEHQVSSKKVIEALKDLGIEVANHMSTINENALRQLDNAVDGTNKKAEAPKKETTSNENGNSKGPNKPNMTNSNEKSNKPNKPAGQANKPATANKSQGAKPATNKPANTGNQTQASGNQQAGGQKRNNNNNSNRPGGGNPNRPGGNNRPNRGGNFNNKGRNTKKKGKLNHSTVPPTPPKPKELPEKIVFSESLTVAELAKKLYREPSELIKKLFMLGVVATINQSLDKDAIELICDDYGVQVEEEIKVDVTDLDVYFENELNEAVDESKLVERPPVVTIMGHVDHGKTTLLDSLRNTKVTLGEAGGITQHIGAYQLEIHNKKITFLDTPGHAAFTAMRARGAQITDITILVVAADDGVMPQTIEAINHAKAAGMPIIVAVNKIDKPQANPDRVMQELTEYELVPEAWGGDTIFAPISAKFGEGLENLLDMILLVSEVEELKANPDRRAIGSVIEAELDKGRGPVATLLVQDGTLNIGDPIVVGNTFGRVRAMVNDLGRRVKKVGPSTPVEITGLNDVPQAGDRFVVFEDEKTARNIGETRASRALVAQRSATNRVSLDNLFEHMKAGEMKEVNVIIKADVQGSVEALAASLRKIDVEGVNVKIIHTAVGAINESDITLAAASNAIIIGFNVRPTTQAREAAENESVDIRLHRVIYKAIDEIEAAMKGMLDPEFQEKIIGQAQVRQTINVSKVGTIAGCYVTDGKITRDSGVRIIRDGIVVFEGEIATLKRFKDDAKEVAKGYECGITVQNFNDIKEDDVIEAYVMEEIERK.

The interval 44–195 is disordered; it reads RQLDNAVDGT…TPPKPKELPE (152 aa). A compositionally biased stretch (basic and acidic residues) spans 53-65; the sequence is TNKKAEAPKKETT. Positions 66–81 are enriched in polar residues; sequence SNENGNSKGPNKPNMT. Over residues 82–93 the composition is skewed to low complexity; the sequence is NSNEKSNKPNKP. Over residues 115 to 126 the composition is skewed to polar residues; that stretch reads KPANTGNQTQAS. A compositionally biased stretch (low complexity) spans 127–169; the sequence is GNQQAGGQKRNNNNNSNRPGGGNPNRPGGNNRPNRGGNFNNKG. Residues 282 to 451 form the tr-type G domain; sequence ERPPVVTIMG…LLVSEVEELK (170 aa). Positions 291-298 are G1; the sequence is GHVDHGKT. 291–298 contributes to the GTP binding site; that stretch reads GHVDHGKT. The segment at 316-320 is G2; that stretch reads GITQH. Residues 337–340 are G3; it reads DTPG. GTP-binding positions include 337–341 and 391–394; these read DTPGH and NKID. Residues 391–394 are G4; sequence NKID. A G5 region spans residues 427 to 429; the sequence is SAK.

Belongs to the TRAFAC class translation factor GTPase superfamily. Classic translation factor GTPase family. IF-2 subfamily.

The protein resides in the cytoplasm. One of the essential components for the initiation of protein synthesis. Protects formylmethionyl-tRNA from spontaneous hydrolysis and promotes its binding to the 30S ribosomal subunits. Also involved in the hydrolysis of GTP during the formation of the 70S ribosomal complex. The protein is Translation initiation factor IF-2 of Listeria monocytogenes serotype 4a (strain HCC23).